We begin with the raw amino-acid sequence, 463 residues long: Argininosuccinate lyase (463 aa).

It belongs to the lyase 1 family. Argininosuccinate lyase subfamily.

It localises to the cytoplasm. The enzyme catalyses 2-(N(omega)-L-arginino)succinate = fumarate + L-arginine. It participates in amino-acid biosynthesis; L-arginine biosynthesis; L-arginine from L-ornithine and carbamoyl phosphate: step 3/3. The protein is Argininosuccinate lyase of Ruegeria pomeroyi (strain ATCC 700808 / DSM 15171 / DSS-3) (Silicibacter pomeroyi).